We begin with the raw amino-acid sequence, 1496 residues long: DNA-directed RNA polymerase subunit beta' (1496 aa).

Zn(2+) contacts are provided by Cys70, Cys72, Cys85, and Cys88. Mg(2+) contacts are provided by Asp461, Asp463, and Asp465. 4 residues coordinate Zn(2+): Cys908, Cys982, Cys989, and Cys992. The tract at residues 1467-1496 (DKDMQVEGESEVPAIPPVAEGSAPEAPPAE) is disordered.

The protein belongs to the RNA polymerase beta' chain family. The RNAP catalytic core consists of 2 alpha, 1 beta, 1 beta' and 1 omega subunit. When a sigma factor is associated with the core the holoenzyme is formed, which can initiate transcription. Mg(2+) is required as a cofactor. Zn(2+) serves as cofactor.

It carries out the reaction RNA(n) + a ribonucleoside 5'-triphosphate = RNA(n+1) + diphosphate. Functionally, DNA-dependent RNA polymerase catalyzes the transcription of DNA into RNA using the four ribonucleoside triphosphates as substrates. The chain is DNA-directed RNA polymerase subunit beta' from Paramagnetospirillum magneticum (strain ATCC 700264 / AMB-1) (Magnetospirillum magneticum).